We begin with the raw amino-acid sequence, 656 residues long: Kinesin-related protein SMY1 (656 aa).

Residues 27–364 form the Kinesin motor domain; sequence HIEVILRAIP…LEFGDSIRQI (338 aa). 114 to 121 serves as a coordination point for ATP; that stretch reads GPSFSGKS. Thr583 carries the phosphothreonine modification.

The protein belongs to the TRAFAC class myosin-kinesin ATPase superfamily. Kinesin family.

It is found in the cytoplasm. The protein resides in the cytoskeleton. Possible microtubule-based motor that can interact or substitute with myosin 2 (MYO2). In Saccharomyces cerevisiae (strain ATCC 204508 / S288c) (Baker's yeast), this protein is Kinesin-related protein SMY1 (SMY1).